Consider the following 472-residue polypeptide: Siroheme synthase 2 (472 aa).

Residues 1–204 form a precorrin-2 dehydrogenase /sirohydrochlorin ferrochelatase region; the sequence is MDYFPIFCQL…EDQVQVEQHV (204 aa). NAD(+) is bound by residues 22–23 and 43–44; these read EV and CE. Residue Ser-128 is modified to Phosphoserine. The interval 216–472 is uroporphyrinogen-III C-methyltransferase; that stretch reads GEVVLVGAGP…GMKEQVERVG (257 aa). Pro-225 is a binding site for S-adenosyl-L-methionine. The active-site Proton acceptor is the Asp-248. The active-site Proton donor is the Lys-270. Residues 301–303, Ile-306, 331–332, Met-382, and Gly-411 each bind S-adenosyl-L-methionine; these read GGD and TA.

The protein in the N-terminal section; belongs to the precorrin-2 dehydrogenase / sirohydrochlorin ferrochelatase family. This sequence in the C-terminal section; belongs to the precorrin methyltransferase family.

The catalysed reaction is uroporphyrinogen III + 2 S-adenosyl-L-methionine = precorrin-2 + 2 S-adenosyl-L-homocysteine + H(+). It catalyses the reaction precorrin-2 + NAD(+) = sirohydrochlorin + NADH + 2 H(+). The enzyme catalyses siroheme + 2 H(+) = sirohydrochlorin + Fe(2+). Its pathway is cofactor biosynthesis; adenosylcobalamin biosynthesis; precorrin-2 from uroporphyrinogen III: step 1/1. It participates in cofactor biosynthesis; adenosylcobalamin biosynthesis; sirohydrochlorin from precorrin-2: step 1/1. The protein operates within porphyrin-containing compound metabolism; siroheme biosynthesis; precorrin-2 from uroporphyrinogen III: step 1/1. It functions in the pathway porphyrin-containing compound metabolism; siroheme biosynthesis; siroheme from sirohydrochlorin: step 1/1. Its pathway is porphyrin-containing compound metabolism; siroheme biosynthesis; sirohydrochlorin from precorrin-2: step 1/1. Multifunctional enzyme that catalyzes the SAM-dependent methylations of uroporphyrinogen III at position C-2 and C-7 to form precorrin-2 via precorrin-1. Then it catalyzes the NAD-dependent ring dehydrogenation of precorrin-2 to yield sirohydrochlorin. Finally, it catalyzes the ferrochelation of sirohydrochlorin to yield siroheme. The chain is Siroheme synthase 2 from Yersinia enterocolitica serotype O:8 / biotype 1B (strain NCTC 13174 / 8081).